Here is a 175-residue protein sequence, read N- to C-terminus: MLTSGIILLEGGLLNPNPGLIFWTALTFLIVLVILRKTAWGPILSMLEERAKSIQSAIDRAHTAKDEAEAILKKNRDLLAKADAEADKIIREAKEVADKLRADLTEKAHDESRKIIASAKEEIEQEKRRALDVLRNEVADMAVKGAEKIIRTTLDADKQKAVVNDMIKEMAASRN.

The chain crosses the membrane as a helical span at residues 14-34; that stretch reads LNPNPGLIFWTALTFLIVLVI.

Belongs to the ATPase B chain family. In terms of assembly, F-type ATPases have 2 components, F(1) - the catalytic core - and F(0) - the membrane proton channel. F(1) has five subunits: alpha(3), beta(3), gamma(1), delta(1), epsilon(1). F(0) has four main subunits: a(1), b(2) and c(10-14). The alpha and beta chains form an alternating ring which encloses part of the gamma chain. F(1) is attached to F(0) by a central stalk formed by the gamma and epsilon chains, while a peripheral stalk is formed by the delta and b chains.

The protein localises to the cell inner membrane. Functionally, f(1)F(0) ATP synthase produces ATP from ADP in the presence of a proton or sodium gradient. F-type ATPases consist of two structural domains, F(1) containing the extramembraneous catalytic core and F(0) containing the membrane proton channel, linked together by a central stalk and a peripheral stalk. During catalysis, ATP synthesis in the catalytic domain of F(1) is coupled via a rotary mechanism of the central stalk subunits to proton translocation. Component of the F(0) channel, it forms part of the peripheral stalk, linking F(1) to F(0). This chain is ATP synthase subunit b, found in Chlorobaculum tepidum (strain ATCC 49652 / DSM 12025 / NBRC 103806 / TLS) (Chlorobium tepidum).